Consider the following 384-residue polypeptide: Lipid-A-disaccharide synthase (384 aa).

This sequence belongs to the LpxB family.

It carries out the reaction a lipid X + a UDP-2-N,3-O-bis[(3R)-3-hydroxyacyl]-alpha-D-glucosamine = a lipid A disaccharide + UDP + H(+). It participates in bacterial outer membrane biogenesis; LPS lipid A biosynthesis. Its function is as follows. Condensation of UDP-2,3-diacylglucosamine and 2,3-diacylglucosamine-1-phosphate to form lipid A disaccharide, a precursor of lipid A, a phosphorylated glycolipid that anchors the lipopolysaccharide to the outer membrane of the cell. The sequence is that of Lipid-A-disaccharide synthase (lpxB) from Neisseria meningitidis serogroup B (strain ATCC BAA-335 / MC58).